Here is a 462-residue protein sequence, read N- to C-terminus: Argininosuccinate lyase (462 aa).

This sequence belongs to the lyase 1 family. Argininosuccinate lyase subfamily.

It localises to the cytoplasm. It catalyses the reaction 2-(N(omega)-L-arginino)succinate = fumarate + L-arginine. Its pathway is amino-acid biosynthesis; L-arginine biosynthesis; L-arginine from L-ornithine and carbamoyl phosphate: step 3/3. The polypeptide is Argininosuccinate lyase (Streptococcus agalactiae serotype Ia (strain ATCC 27591 / A909 / CDC SS700)).